The primary structure comprises 321 residues: Probable 1-aminocyclopropane-1-carboxylate oxidase (321 aa).

The region spanning 159–259 (PTFGTKVSNY…RMSIASFYNP (101 aa)) is the Fe2OG dioxygenase domain. 3 residues coordinate Fe cation: H183, D185, and H240.

Belongs to the iron/ascorbate-dependent oxidoreductase family. Requires Fe cation as cofactor.

The enzyme catalyses 1-aminocyclopropane-1-carboxylate + L-ascorbate + O2 = ethene + L-dehydroascorbate + hydrogen cyanide + CO2 + 2 H2O. It functions in the pathway alkene biosynthesis; ethylene biosynthesis via S-adenosyl-L-methionine; ethylene from S-adenosyl-L-methionine: step 2/2. This chain is Probable 1-aminocyclopropane-1-carboxylate oxidase (ACO), found in Dianthus caryophyllus (Carnation).